Here is a 756-residue protein sequence, read N- to C-terminus: Anaphase-promoting complex subunit 5 (756 aa).

TPR repeat units lie at residues 301–334, 522–555, 581–614, and 678–711; these read RYAA…AQES, DGRY…KAQN, ISVL…SREY, and YSQQ…EQLR.

The protein belongs to the APC5 family. The APC/C is composed of at least 12 subunits.

The protein localises to the nucleus. Its subcellular location is the cytoplasm. It localises to the cytoskeleton. The protein resides in the spindle. The protein operates within protein modification; protein ubiquitination. Functionally, component of the anaphase promoting complex/cyclosome (APC/C), a cell cycle-regulated E3 ubiquitin ligase that controls progression through mitosis and the G1 phase of the cell cycle. The APC/C complex acts by mediating ubiquitination and subsequent degradation of target proteins: it mainly mediates the formation of 'Lys-11'-linked polyubiquitin chains and, to a lower extent, the formation of 'Lys-48'- and 'Lys-63'-linked polyubiquitin chains. The APC/C complex catalyzes assembly of branched 'Lys-11'-/'Lys-48'-linked branched ubiquitin chains on target proteins. This chain is Anaphase-promoting complex subunit 5 (ANAPC5), found in Gallus gallus (Chicken).